The following is a 76-amino-acid chain: Small ribosomal subunit protein eS17 (76 aa).

This sequence belongs to the eukaryotic ribosomal protein eS17 family.

This Picrophilus torridus (strain ATCC 700027 / DSM 9790 / JCM 10055 / NBRC 100828 / KAW 2/3) protein is Small ribosomal subunit protein eS17.